The primary structure comprises 799 residues: ATP-dependent DNA helicase Hel308 (799 aa).

Residues Gln-29 and 47 to 54 (IPTASGKT) contribute to the ATP site. The 167-residue stretch at 34–200 (EAGVTEGENL…WLDAGLVDSD (167 aa)) folds into the Helicase ATP-binding domain. Residues 145–148 (DEVH) carry the DEAH box motif. The region spanning 234-435 (QTAAIVRDTL…EPALRTHILA (202 aa)) is the Helicase C-terminal domain. 2 disordered regions span residues 522-566 (RGAS…DRDP) and 750-799 (NVLE…LGDF). The segment covering 553-566 (LAEDADESDADRDP) has biased composition (acidic residues).

The protein belongs to the helicase family. Hel308 subfamily. In terms of assembly, monomer.

The catalysed reaction is Couples ATP hydrolysis with the unwinding of duplex DNA by translocating in the 3'-5' direction.. It carries out the reaction ATP + H2O = ADP + phosphate + H(+). In terms of biological role, DNA-dependent ATPase and 3'-5' DNA helicase that may be involved in repair of stalled replication forks. The chain is ATP-dependent DNA helicase Hel308 from Haloarcula marismortui (strain ATCC 43049 / DSM 3752 / JCM 8966 / VKM B-1809) (Halobacterium marismortui).